The following is a 405-amino-acid chain: Patatin-like protein 2 (405 aa).

Residues 24–230 (LSIDGGGVRG…AANNPTLCAM (207 aa)) form the PNPLA domain. The short motif at 28-33 (GGGVRG) is the GXGXXG element. The GXSXG motif lies at 66–70 (GTSTG). Residue Ser-68 is the Nucleophile of the active site. Asp-217 functions as the Proton acceptor in the catalytic mechanism. Positions 217–219 (DGG) match the DGA/G motif.

The protein belongs to the patatin family.

Its function is as follows. Possesses non-specific lipolytic acyl hydrolase (LAH) activity. Hydrolyzes phospholipids as well as galactolipids. May play a role in disease resistance. This is Patatin-like protein 2 (PLP2) from Oryza sativa subsp. indica (Rice).